A 147-amino-acid polypeptide reads, in one-letter code: Small ribosomal subunit protein eS19 (147 aa).

Belongs to the eukaryotic ribosomal protein eS19 family. As to quaternary structure, part of the 30S ribosomal subunit.

Functionally, may be involved in maturation of the 30S ribosomal subunit. The sequence is that of Small ribosomal subunit protein eS19 from Archaeoglobus fulgidus (strain ATCC 49558 / DSM 4304 / JCM 9628 / NBRC 100126 / VC-16).